The sequence spans 709 residues: Fatty acid oxidation complex subunit alpha (709 aa).

The enoyl-CoA hydratase stretch occupies residues Met1–Pro188. The segment at Arg308–Phe709 is 3-hydroxyacyl-CoA dehydrogenase.

This sequence in the N-terminal section; belongs to the enoyl-CoA hydratase/isomerase family. The protein in the central section; belongs to the 3-hydroxyacyl-CoA dehydrogenase family. Heterotetramer of two alpha chains (FadJ) and two beta chains (FadI).

It localises to the cytoplasm. The enzyme catalyses a (3S)-3-hydroxyacyl-CoA = a (2E)-enoyl-CoA + H2O. It catalyses the reaction a 4-saturated-(3S)-3-hydroxyacyl-CoA = a (3E)-enoyl-CoA + H2O. The catalysed reaction is a (3S)-3-hydroxyacyl-CoA + NAD(+) = a 3-oxoacyl-CoA + NADH + H(+). It carries out the reaction (3S)-3-hydroxybutanoyl-CoA = (3R)-3-hydroxybutanoyl-CoA. The protein operates within lipid metabolism; fatty acid beta-oxidation. Functionally, catalyzes the formation of a hydroxyacyl-CoA by addition of water on enoyl-CoA. Also exhibits 3-hydroxyacyl-CoA epimerase and 3-hydroxyacyl-CoA dehydrogenase activities. The polypeptide is Fatty acid oxidation complex subunit alpha (Shewanella sp. (strain MR-4)).